A 53-amino-acid chain; its full sequence is Rubredoxin-1 (53 aa).

One can recognise a Rubredoxin-like domain in the interval 1 to 53 (MEKFVCDVCGYIYDPVVGDPDNGVAPGTKFKDIPDTWVCPLCKLDKTHFSKVE). The Fe cation site is built by C6, C9, C39, and C42.

This sequence belongs to the rubredoxin family. Requires Fe(3+) as cofactor.

Its function is as follows. Rubredoxin is a small nonheme, iron protein lacking acid-labile sulfide. Its single Fe, chelated to 4 Cys, functions as an electron acceptor and may also stabilize the conformation of the molecule. This is Rubredoxin-1 (rubR1) from Clostridium perfringens (strain 13 / Type A).